A 250-amino-acid chain; its full sequence is 7-cyano-7-deazaguanine synthase (250 aa).

28 to 38 serves as a coordination point for ATP; that stretch reads LSGGLDSATCV. Residues cysteine 213, cysteine 226, cysteine 229, and cysteine 232 each coordinate Zn(2+).

This sequence belongs to the QueC family. It depends on Zn(2+) as a cofactor.

It carries out the reaction 7-carboxy-7-deazaguanine + NH4(+) + ATP = 7-cyano-7-deazaguanine + ADP + phosphate + H2O + H(+). It participates in purine metabolism; 7-cyano-7-deazaguanine biosynthesis. In terms of biological role, catalyzes the ATP-dependent conversion of 7-carboxy-7-deazaguanine (CDG) to 7-cyano-7-deazaguanine (preQ(0)). This chain is 7-cyano-7-deazaguanine synthase, found in Rhodopirellula baltica (strain DSM 10527 / NCIMB 13988 / SH1).